A 282-amino-acid polypeptide reads, in one-letter code: 2-dehydro-3-deoxyphosphooctonate aldolase (282 aa).

Belongs to the KdsA family.

Its subcellular location is the cytoplasm. The catalysed reaction is D-arabinose 5-phosphate + phosphoenolpyruvate + H2O = 3-deoxy-alpha-D-manno-2-octulosonate-8-phosphate + phosphate. It functions in the pathway carbohydrate biosynthesis; 3-deoxy-D-manno-octulosonate biosynthesis; 3-deoxy-D-manno-octulosonate from D-ribulose 5-phosphate: step 2/3. Its pathway is bacterial outer membrane biogenesis; lipopolysaccharide biosynthesis. The protein is 2-dehydro-3-deoxyphosphooctonate aldolase of Shewanella baltica (strain OS223).